Here is a 542-residue protein sequence, read N- to C-terminus: CTP synthase (542 aa).

Positions 1–269 are amidoligase domain; sequence MQTKYIFITG…DALICELLHL (269 aa). Serine 14 serves as a coordination point for CTP. Residue serine 14 participates in UTP binding. ATP is bound by residues 15–20 and aspartate 72; that span reads SLGKGL. The Mg(2+) site is built by aspartate 72 and glutamate 143. CTP is bound by residues 150-152, 189-194, and lysine 225; these read DIE and KTKPSQ. Residues 189 to 194 and lysine 225 contribute to the UTP site; that span reads KTKPSQ. 241–243 lines the ATP pocket; that stretch reads KDV. One can recognise a Glutamine amidotransferase type-1 domain in the interval 301–538; that stretch reads YVQHQDAYKS…IQAMIIYHKS (238 aa). Glycine 358 provides a ligand contact to L-glutamine. Catalysis depends on cysteine 385, which acts as the Nucleophile; for glutamine hydrolysis. L-glutamine is bound by residues 386 to 389, glutamate 409, and arginine 466; that span reads LGMQ. Residues histidine 511 and glutamate 513 contribute to the active site.

This sequence belongs to the CTP synthase family. As to quaternary structure, homotetramer.

It carries out the reaction UTP + L-glutamine + ATP + H2O = CTP + L-glutamate + ADP + phosphate + 2 H(+). The catalysed reaction is L-glutamine + H2O = L-glutamate + NH4(+). It catalyses the reaction UTP + NH4(+) + ATP = CTP + ADP + phosphate + 2 H(+). It participates in pyrimidine metabolism; CTP biosynthesis via de novo pathway; CTP from UDP: step 2/2. With respect to regulation, allosterically activated by GTP, when glutamine is the substrate; GTP has no effect on the reaction when ammonia is the substrate. The allosteric effector GTP functions by stabilizing the protein conformation that binds the tetrahedral intermediate(s) formed during glutamine hydrolysis. Inhibited by the product CTP, via allosteric rather than competitive inhibition. Catalyzes the ATP-dependent amination of UTP to CTP with either L-glutamine or ammonia as the source of nitrogen. Regulates intracellular CTP levels through interactions with the four ribonucleotide triphosphates. This is CTP synthase from Protochlamydia amoebophila (strain UWE25).